We begin with the raw amino-acid sequence, 447 residues long: Protein king tubby (447 aa).

2 stretches are compositionally biased toward low complexity: residues 71 to 92 (GTGP…YSDS) and 157 to 169 (NNNN…NSSS). Positions 71–196 (GTGPNVTATS…GGAPDTEGDV (126 aa)) are disordered.

Belongs to the TUB family.

Its subcellular location is the cytoplasm. The protein resides in the nucleus. The sequence is that of Protein king tubby from Anopheles gambiae (African malaria mosquito).